The following is a 43-amino-acid chain: Cytochrome b559 subunit beta (43 aa).

The helical transmembrane segment at Trp18 to Ala34 threads the bilayer. Position 22 (His22) interacts with heme.

It belongs to the PsbE/PsbF family. In terms of assembly, heterodimer of an alpha subunit and a beta subunit. PSII is composed of 1 copy each of membrane proteins PsbA, PsbB, PsbC, PsbD, PsbE, PsbF, PsbH, PsbI, PsbJ, PsbK, PsbL, PsbM, PsbT, PsbX, PsbY, PsbZ, Psb30/Ycf12, peripheral proteins PsbO, CyanoQ (PsbQ), PsbU, PsbV and a large number of cofactors. It forms dimeric complexes. It depends on heme b as a cofactor.

The protein resides in the cellular thylakoid membrane. Its function is as follows. This b-type cytochrome is tightly associated with the reaction center of photosystem II (PSII). PSII is a light-driven water:plastoquinone oxidoreductase that uses light energy to abstract electrons from H(2)O, generating O(2) and a proton gradient subsequently used for ATP formation. It consists of a core antenna complex that captures photons, and an electron transfer chain that converts photonic excitation into a charge separation. The polypeptide is Cytochrome b559 subunit beta (Picosynechococcus sp. (strain ATCC 27264 / PCC 7002 / PR-6) (Agmenellum quadruplicatum)).